A 50-amino-acid polypeptide reads, in one-letter code: Temporin-SHc (50 aa).

Residues Phe1–Cys10 form the signal peptide. The propeptide occupies Glu11–Arg35. Phe48 is subject to Phenylalanine amide.

As to expression, expressed by the skin glands.

It is found in the secreted. Its subcellular location is the target cell membrane. Its function is as follows. Amphipathic alpha-helical antimicrobial peptide with potent activity against some Gram-positive bacteria (MIC=4-&gt;80 uM), potent activity against fungi (MIC=10-20 uM), and no activity against Gram-negative bacteria. Does not display anti-leishmania activity. Does not show hemolytic activity (LC(50)&gt;80 uM). This Pelophylax saharicus (Sahara frog) protein is Temporin-SHc.